Here is a 380-residue protein sequence, read N- to C-terminus: UDP-N-acetylglucosamine 2-epimerase (380 aa).

Belongs to the UDP-N-acetylglucosamine 2-epimerase family.

The protein localises to the cytoplasm. The catalysed reaction is UDP-N-acetyl-alpha-D-glucosamine = UDP-N-acetyl-alpha-D-mannosamine. The protein operates within cell wall biogenesis; poly(glycerol phosphate) teichoic acid biosynthesis. Its function is as follows. Catalyzes the conversion of UDP-N-acetylglucosamine into UDP-N-acetylmannosamine, a precursor of the teichoic acid linkage unit. The chain is UDP-N-acetylglucosamine 2-epimerase (mnaA) from Bacillus subtilis (strain 168).